The chain runs to 319 residues: NADH-quinone oxidoreductase subunit H 1 (319 aa).

The next 8 helical transmembrane spans lie at Leu8–Ile28, Leu74–Ile94, Ile107–Gly127, Leu147–Phe167, Met179–Glu199, Phe230–Phe250, Leu258–Leu278, and Leu297–Asp317.

Belongs to the complex I subunit 1 family. NDH-1 is composed of 14 different subunits. Subunits NuoA, H, J, K, L, M, N constitute the membrane sector of the complex.

The protein resides in the cell inner membrane. It carries out the reaction a quinone + NADH + 5 H(+)(in) = a quinol + NAD(+) + 4 H(+)(out). In terms of biological role, NDH-1 shuttles electrons from NADH, via FMN and iron-sulfur (Fe-S) centers, to quinones in the respiratory chain. The immediate electron acceptor for the enzyme in this species is believed to be ubiquinone. Couples the redox reaction to proton translocation (for every two electrons transferred, four hydrogen ions are translocated across the cytoplasmic membrane), and thus conserves the redox energy in a proton gradient. This subunit may bind ubiquinone. The sequence is that of NADH-quinone oxidoreductase subunit H 1 from Nitrosococcus oceani (strain ATCC 19707 / BCRC 17464 / JCM 30415 / NCIMB 11848 / C-107).